Here is a 55-residue protein sequence, read N- to C-terminus: Sec-independent protein translocase protein TatA (55 aa).

Residues 1-21 (MGMSFSHLLIVLLIIFVLFGA) form a helical membrane-spanning segment.

The protein belongs to the TatA/E family. As to quaternary structure, the Tat system comprises two distinct complexes: a TatABC complex, containing multiple copies of TatA, TatB and TatC subunits, and a separate TatA complex, containing only TatA subunits. Substrates initially bind to the TatABC complex, which probably triggers association of the separate TatA complex to form the active translocon.

It localises to the cell inner membrane. Functionally, part of the twin-arginine translocation (Tat) system that transports large folded proteins containing a characteristic twin-arginine motif in their signal peptide across membranes. TatA could form the protein-conducting channel of the Tat system. The polypeptide is Sec-independent protein translocase protein TatA (Rickettsia peacockii (strain Rustic)).